Consider the following 953-residue polypeptide: Catenin alpha-2 (953 aa).

Thr-632 is subject to Phosphothreonine. A phosphoserine mark is found at Ser-640, Ser-651, and Ser-901. Residues 912-927 show a composition bias toward basic and acidic residues; sequence EKKPLVKREKPEEFQT. The segment at 912–939 is disordered; it reads EKKPLVKREKPEEFQTRVRRGSQKKHIS. Positions 928–938 are enriched in basic residues; it reads RVRRGSQKKHI. At Ser-939 the chain carries Phosphoserine.

It belongs to the vinculin/alpha-catenin family. Interacts with CDH1 and CDH2. Interacts with ZNF639; recruits CTNNA2 to the nucleus. Interacts with F-actin. In terms of tissue distribution, expressed almost exclusively in the nervous system.

The protein localises to the cell membrane. It localises to the cytoplasm. Its subcellular location is the cytoskeleton. It is found in the cell junction. The protein resides in the adherens junction. The protein localises to the cell projection. It localises to the axon. Its subcellular location is the nucleus. Its function is as follows. May function as a linker between cadherin adhesion receptors and the cytoskeleton to regulate cell-cell adhesion and differentiation in the nervous system. Required for proper regulation of cortical neuronal migration and neurite growth. It acts as a negative regulator of Arp2/3 complex activity and Arp2/3-mediated actin polymerization. It thereby suppresses excessive actin branching which would impair neurite growth and stability. Regulates morphological plasticity of synapses and cerebellar and hippocampal lamination during development. Functions in the control of startle modulation. The sequence is that of Catenin alpha-2 (Ctnna2) from Mus musculus (Mouse).